The chain runs to 165 residues: Destrin (165 aa).

Alanine 2 is modified (N-acetylalanine). One can recognise an ADF-H domain in the interval 4 to 153 (GVQVADEVCR…NRACIAEKLG (150 aa)). Residues 30 to 34 (KKRKK) carry the Nuclear localization signal motif.

Belongs to the actin-binding proteins ADF family.

Actin-depolymerizing protein. Severs actin filaments (F-actin) and binds to actin monomers (G-actin). Acts in a pH-independent manner. This chain is Destrin (DSTN), found in Gallus gallus (Chicken).